Consider the following 251-residue polypeptide: Imidazole glycerol phosphate synthase subunit HisF (251 aa).

Catalysis depends on residues Asp-11 and Asp-130.

The protein belongs to the HisA/HisF family. In terms of assembly, heterodimer of HisH and HisF.

The protein localises to the cytoplasm. It catalyses the reaction 5-[(5-phospho-1-deoxy-D-ribulos-1-ylimino)methylamino]-1-(5-phospho-beta-D-ribosyl)imidazole-4-carboxamide + L-glutamine = D-erythro-1-(imidazol-4-yl)glycerol 3-phosphate + 5-amino-1-(5-phospho-beta-D-ribosyl)imidazole-4-carboxamide + L-glutamate + H(+). Its pathway is amino-acid biosynthesis; L-histidine biosynthesis; L-histidine from 5-phospho-alpha-D-ribose 1-diphosphate: step 5/9. In terms of biological role, IGPS catalyzes the conversion of PRFAR and glutamine to IGP, AICAR and glutamate. The HisF subunit catalyzes the cyclization activity that produces IGP and AICAR from PRFAR using the ammonia provided by the HisH subunit. This chain is Imidazole glycerol phosphate synthase subunit HisF, found in Chlorobium phaeobacteroides (strain BS1).